The primary structure comprises 207 residues: Small ribosomal subunit protein uS2 (207 aa).

Belongs to the universal ribosomal protein uS2 family.

The protein is Small ribosomal subunit protein uS2 of Pyrobaculum islandicum (strain DSM 4184 / JCM 9189 / GEO3).